The primary structure comprises 377 residues: MAAHGGGGVEEDQAGSSSLCPPAAEAEAAAAAAAIARAARPPRPGRDKRLGVRHPLKHRRFRAGGKAAVAAGAREVGEATTVAEATATGPPKGSDEDDEARYICGGWTSDDGRMSCGYSSFRGRRANMEDFYDIKSSKVDDNQINLFGIFDGHGGSHAAEHLKKHLFENLLKHPSFITDTKSAISETYRKTDSDFLDAETNINREDGSTASTAIFVGNHIYVANVGDSRTVMSKAGKAIALSSDHKPNRKDERKRIENAGGVVTWSGTWRVGGVLAMSRAFGNRFLKRFVVAEPEVQEQEIDDDLEFLILASDGLWDVVSNEHAVAFVKAEEGPEAAARKLAEIAFARGSTDNITCIVVKFLHAKMAVDAASSSERS.

2 disordered regions span residues 1 to 68 (MAAH…GKAA) and 80 to 99 (TTVA…EDDE). Residues 21–39 (PPAAEAEAAAAAAAIARAA) show a composition bias toward low complexity. Basic residues predominate over residues 51-63 (GVRHPLKHRRFRA). A compositionally biased stretch (low complexity) spans 80-89 (TTVAEATATG). Residues 115 to 361 (SCGYSSFRGR…DNITCIVVKF (247 aa)) form the PPM-type phosphatase domain. Residues D151, G152, D313, and D352 each coordinate Mn(2+).

The protein belongs to the PP2C family. Requires Mg(2+) as cofactor. The cofactor is Mn(2+).

It catalyses the reaction O-phospho-L-seryl-[protein] + H2O = L-seryl-[protein] + phosphate. It carries out the reaction O-phospho-L-threonyl-[protein] + H2O = L-threonyl-[protein] + phosphate. The protein is Probable protein phosphatase 2C 7 of Oryza sativa subsp. japonica (Rice).